A 560-amino-acid polypeptide reads, in one-letter code: DNA ligase B (560 aa).

Catalysis depends on K124, which acts as the N6-AMP-lysine intermediate.

The protein belongs to the NAD-dependent DNA ligase family. LigB subfamily.

It catalyses the reaction NAD(+) + (deoxyribonucleotide)n-3'-hydroxyl + 5'-phospho-(deoxyribonucleotide)m = (deoxyribonucleotide)n+m + AMP + beta-nicotinamide D-nucleotide.. Catalyzes the formation of phosphodiester linkages between 5'-phosphoryl and 3'-hydroxyl groups in double-stranded DNA using NAD as a coenzyme and as the energy source for the reaction. The protein is DNA ligase B of Shigella flexneri.